We begin with the raw amino-acid sequence, 459 residues long: GTPase Der (459 aa).

EngA-type G domains lie at 4–169 and 179–355; these read PLVA…PEVT and IAVS…AAHR. GTP-binding positions include 10–17, 57–61, 120–123, 185–192, 232–236, and 297–300; these read GRPNVGKS, DTGGL, NKCE, DTAGI, and NKWD. The 86-residue stretch at 356-441 folds into the KH-like domain; the sequence is KRVPTAVVNE…PIRFLWRGKS (86 aa).

This sequence belongs to the TRAFAC class TrmE-Era-EngA-EngB-Septin-like GTPase superfamily. EngA (Der) GTPase family. In terms of assembly, associates with the 50S ribosomal subunit.

In terms of biological role, GTPase that plays an essential role in the late steps of ribosome biogenesis. The sequence is that of GTPase Der from Synechococcus sp. (strain JA-2-3B'a(2-13)) (Cyanobacteria bacterium Yellowstone B-Prime).